We begin with the raw amino-acid sequence, 298 residues long: MNSGKILIVSSTHGNEINPVWSVNQYSKQGNIIDKNIEYKFIIGNPLAYEKGCRYIDKDLNRSFNLIKNNHDTSIYEIRRANFLVEKFGVNGSEPCDIAIDLHTTTANMGTSIVMYGRREKDFCLAALLQHKFGLPIYLHEKDEKQTGFLVEAWPCGLVIEIGPVAQNFYDPKIINRFLIIISSLREEINKLKNKQKQLPKLVIVHVHQGSIDYPRGEDGNINALIHPKRMNQDWKPIKKGDPLFMDMEGCTKSYNGKNTLWPVFIGEVAYKEKNIAMSYTKKEVINLPTQICEDFFN.

2 residues coordinate Zn(2+): His13 and Glu16. Residues Arg54 and 61-62 (NR) contribute to the substrate site. His103 serves as a coordination point for Zn(2+). Residues Glu161 and Tyr271 each coordinate substrate.

The protein belongs to the AspA/AstE family. Aspartoacylase subfamily. Zn(2+) serves as cofactor.

It catalyses the reaction an N-acyl-L-aspartate + H2O = a carboxylate + L-aspartate. The sequence is that of Probable aspartoacylase from Prochlorococcus marinus (strain MIT 9515).